Here is an 88-residue protein sequence, read N- to C-terminus: Small ribosomal subunit protein uS17 (88 aa).

It belongs to the universal ribosomal protein uS17 family. Part of the 30S ribosomal subunit.

Functionally, one of the primary rRNA binding proteins, it binds specifically to the 5'-end of 16S ribosomal RNA. The sequence is that of Small ribosomal subunit protein uS17 from Pseudomonas putida (strain ATCC 700007 / DSM 6899 / JCM 31910 / BCRC 17059 / LMG 24140 / F1).